The sequence spans 481 residues: Proline--tRNA ligase (481 aa).

The protein belongs to the class-II aminoacyl-tRNA synthetase family. ProS type 3 subfamily. Homodimer.

Its subcellular location is the cytoplasm. The enzyme catalyses tRNA(Pro) + L-proline + ATP = L-prolyl-tRNA(Pro) + AMP + diphosphate. Catalyzes the attachment of proline to tRNA(Pro) in a two-step reaction: proline is first activated by ATP to form Pro-AMP and then transferred to the acceptor end of tRNA(Pro). The protein is Proline--tRNA ligase of Chlorobium phaeovibrioides (strain DSM 265 / 1930) (Prosthecochloris vibrioformis (strain DSM 265)).